Here is a 625-residue protein sequence, read N- to C-terminus: Glucose dehydrogenase [FAD, quinone] (625 aa).

The N-terminal stretch at 1–42 is a signal peptide; that stretch reads MATSPSSCDCLVGVPTGPTLASTCGGSAFMLFMGLLEVFIRS. 66–95 lines the FAD pocket; that stretch reads DFIVIGGGSAGSVVASRLSEVPQWKVLLIE. The Proton acceptor role is filled by H544. Residue U613 is a non-standard amino acid, selenocysteine.

This sequence belongs to the GMC oxidoreductase family. FAD is required as a cofactor.

It localises to the secreted. The catalysed reaction is a quinone + D-glucose = D-glucono-1,5-lactone + a quinol. In Drosophila pseudoobscura pseudoobscura (Fruit fly), this protein is Glucose dehydrogenase [FAD, quinone] (Gld).